A 315-amino-acid polypeptide reads, in one-letter code: Oxalate oxidoreductase subunit delta (315 aa).

2 consecutive 4Fe-4S ferredoxin-type domains span residues 252-280 (QRPIIDREACTECYTCWIYCPDSCITRTE) and 281-310 (EGPVFNMKYCKGCGLCTAVCPSGALTNVPE). Residues Cys-261, Cys-264, Cys-267, Cys-271, Cys-290, Cys-293, Cys-296, and Cys-300 each coordinate [4Fe-4S] cluster.

As to quaternary structure, dimer of heterotrimer of one alpha, one beta and one delta subunit. [4Fe-4S] cluster serves as cofactor.

The catalysed reaction is oxidized 2[4Fe-4S]-[ferredoxin] + oxalate = reduced 2[4Fe-4S]-[ferredoxin] + 2 CO2. Functionally, catalyzes the anaerobic oxidation of oxalate using a broad range of electron acceptors, including ferredoxin and the nickel-dependent carbon monoxide dehydrogenase. Does not require coenzyme A as cosubstrate. Enables anaerobic growth on oxalate which is used as energy source by the bacteria. In Moorella thermoacetica (strain ATCC 39073 / JCM 9320), this protein is Oxalate oxidoreductase subunit delta.